The following is a 74-amino-acid chain: Small ribosomal subunit protein uS15 (74 aa).

The protein belongs to the universal ribosomal protein uS15 family. In terms of assembly, part of the 30S ribosomal subunit. Forms a bridge to the 50S subunit in the 70S ribosome, contacting the 23S rRNA.

Its function is as follows. One of the primary rRNA binding proteins, it binds directly to 16S rRNA where it helps nucleate assembly of the platform of the 30S subunit by binding and bridging several RNA helices of the 16S rRNA. Functionally, forms an intersubunit bridge (bridge B4) with the 23S rRNA of the 50S subunit in the ribosome. The sequence is that of Small ribosomal subunit protein uS15 from Aster yellows witches'-broom phytoplasma (strain AYWB).